The following is a 177-amino-acid chain: Transcriptional repressor NrdR (177 aa).

The segment at 3 to 34 (CLFCQHTDTRVIDSRVSEDGATIRRRRECEAC) is a zinc-finger region. Residues 49 to 139 (PVIIKKDGGR…VYRSFQDVAD (91 aa)) enclose the ATP-cone domain.

It belongs to the NrdR family. Zn(2+) is required as a cofactor.

Its function is as follows. Negatively regulates transcription of bacterial ribonucleotide reductase nrd genes and operons by binding to NrdR-boxes. The sequence is that of Transcriptional repressor NrdR from Xylella fastidiosa (strain M23).